We begin with the raw amino-acid sequence, 151 residues long: FAD synthase (151 aa).

ATP is bound by residues 21–22, 26–29, and D104; these read TF and HPGH.

The protein belongs to the archaeal FAD synthase family. Homodimer. A divalent metal cation is required as a cofactor.

The enzyme catalyses FMN + ATP + H(+) = FAD + diphosphate. The protein operates within cofactor biosynthesis; FAD biosynthesis; FAD from FMN: step 1/1. Functionally, catalyzes the transfer of the AMP portion of ATP to flavin mononucleotide (FMN) to produce flavin adenine dinucleotide (FAD) coenzyme. This Methanosarcina acetivorans (strain ATCC 35395 / DSM 2834 / JCM 12185 / C2A) protein is FAD synthase.